We begin with the raw amino-acid sequence, 313 residues long: 18S rRNA aminocarboxypropyltransferase (313 aa).

The segment at 1 to 30 (MGKGKNKMHEPKNGRPQRGANGHSSRQNHR) is disordered. Positions 62, 110, 133, and 148 each coordinate S-adenosyl-L-methionine. Over residues 215–228 (KETQERKSRAKEED) the composition is skewed to basic and acidic residues. Positions 215–313 (KETQERKSRA…SYDPLGNLIR (99 aa)) are disordered. Polar residues predominate over residues 237–246 (RRGNGSQSDT). Residues 247–257 (SESEENSEQSD) show a composition bias toward acidic residues. Phosphoserine is present on residues serine 286 and serine 289.

Belongs to the TDD superfamily. TSR3 family.

The protein resides in the cytoplasm. Its subcellular location is the nucleus. The enzyme catalyses an N(1)-methylpseudouridine in rRNA + S-adenosyl-L-methionine = N(1)-methyl-N(3)-[(3S)-3-amino-3-carboxypropyl]pseudouridine in rRNA + S-methyl-5'-thioadenosine + H(+). The catalysed reaction is N(1)-methylpseudouridine(1191) in yeast 18S rRNA + S-adenosyl-L-methionine = N(1)-methyl-N(3)-[(3S)-3-amino-3-carboxypropyl]pseudouridine(1191) in yeast 18S rRNA + S-methyl-5'-thioadenosine + H(+). In terms of biological role, aminocarboxypropyltransferase that catalyzes the aminocarboxypropyl transfer on pseudouridine at position 1191 (Psi1191) in 18S rRNA. It constitutes the last step in biosynthesis of the hypermodified N1-methyl-N3-(3-amino-3-carboxypropyl) pseudouridine (m1acp3-Psi) conserved in eukaryotic 18S rRNA. Required for processing 35S pre-rRNA at site D. The protein is 18S rRNA aminocarboxypropyltransferase of Saccharomyces cerevisiae (strain ATCC 204508 / S288c) (Baker's yeast).